The following is a 368-amino-acid chain: Protein-glutamate methylesterase/protein-glutamine glutaminase (368 aa).

Residues 9–126 (RVLVVDDSAF…SINMRELKDE (118 aa)) form the Response regulatory domain. A 4-aspartylphosphate modification is found at D60. The region spanning 161–354 (SVPARIAVAI…ETVVRAVEMI (194 aa)) is the CheB-type methylesterase domain. Catalysis depends on residues S173, H200, and D296.

It belongs to the CheB family. In terms of processing, phosphorylated by CheA. Phosphorylation of the N-terminal regulatory domain activates the methylesterase activity.

The protein resides in the cytoplasm. It carries out the reaction [protein]-L-glutamate 5-O-methyl ester + H2O = L-glutamyl-[protein] + methanol + H(+). It catalyses the reaction L-glutaminyl-[protein] + H2O = L-glutamyl-[protein] + NH4(+). Its function is as follows. Involved in chemotaxis. Part of a chemotaxis signal transduction system that modulates chemotaxis in response to various stimuli. Catalyzes the demethylation of specific methylglutamate residues introduced into the chemoreceptors (methyl-accepting chemotaxis proteins or MCP) by CheR. Also mediates the irreversible deamidation of specific glutamine residues to glutamic acid. In Pyrococcus abyssi (strain GE5 / Orsay), this protein is Protein-glutamate methylesterase/protein-glutamine glutaminase.